A 590-amino-acid polypeptide reads, in one-letter code: Arginine--tRNA ligase (590 aa).

The short motif at Ala130 to His140 is the 'HIGH' region element.

This sequence belongs to the class-I aminoacyl-tRNA synthetase family. As to quaternary structure, monomer.

Its subcellular location is the cytoplasm. It catalyses the reaction tRNA(Arg) + L-arginine + ATP = L-arginyl-tRNA(Arg) + AMP + diphosphate. The protein is Arginine--tRNA ligase of Methylobacterium nodulans (strain LMG 21967 / CNCM I-2342 / ORS 2060).